The primary structure comprises 106 residues: MSDLISYDDVIDAAYDIFLEMAPDNLEPADVILFTAQFEDRGAAELVETGEDWVEHVGFEVDKEVYAEVRIGLVNEENDVLDDVFARMLISRDPEHKFCHMLWKRD.

It belongs to the putative dsDNA mimic protein family.

In terms of biological role, may act as a double-stranded DNA (dsDNA) mimic. Probably regulates the activity of a dsDNA-binding protein. The protein is Putative double-stranded DNA mimic protein VP1949 of Vibrio parahaemolyticus serotype O3:K6 (strain RIMD 2210633).